A 355-amino-acid polypeptide reads, in one-letter code: NADH dehydrogenase-like protein YutJ (355 aa).

This sequence belongs to the NADH dehydrogenase family. The cofactor is FAD.

This chain is NADH dehydrogenase-like protein YutJ (yutJ), found in Bacillus subtilis (strain 168).